Here is a 457-residue protein sequence, read N- to C-terminus: Argininosuccinate lyase (457 aa).

Belongs to the lyase 1 family. Argininosuccinate lyase subfamily.

Its subcellular location is the cytoplasm. It carries out the reaction 2-(N(omega)-L-arginino)succinate = fumarate + L-arginine. The protein operates within amino-acid biosynthesis; L-arginine biosynthesis; L-arginine from L-ornithine and carbamoyl phosphate: step 3/3. This Haemophilus influenzae (strain ATCC 51907 / DSM 11121 / KW20 / Rd) protein is Argininosuccinate lyase.